Consider the following 345-residue polypeptide: tRNA-dihydrouridine(20/20a) synthase (345 aa).

FMN-binding positions include 32 to 34 and Gln84; that span reads PML. Catalysis depends on Cys114, which acts as the Proton donor. Residues Lys153, His186, 226 to 228, and 248 to 249 each bind FMN; these read NGG and GR.

The protein belongs to the Dus family. DusA subfamily. The cofactor is FMN.

It catalyses the reaction 5,6-dihydrouridine(20) in tRNA + NADP(+) = uridine(20) in tRNA + NADPH + H(+). The catalysed reaction is 5,6-dihydrouridine(20) in tRNA + NAD(+) = uridine(20) in tRNA + NADH + H(+). The enzyme catalyses 5,6-dihydrouridine(20a) in tRNA + NADP(+) = uridine(20a) in tRNA + NADPH + H(+). It carries out the reaction 5,6-dihydrouridine(20a) in tRNA + NAD(+) = uridine(20a) in tRNA + NADH + H(+). Its function is as follows. Catalyzes the synthesis of 5,6-dihydrouridine (D), a modified base found in the D-loop of most tRNAs, via the reduction of the C5-C6 double bond in target uridines. Specifically modifies U20 and U20a in tRNAs. The protein is tRNA-dihydrouridine(20/20a) synthase of Escherichia coli O157:H7.